A 246-amino-acid chain; its full sequence is Thaumatin-like protein 1 (246 aa).

A signal peptide spans 1–24 (MMKSQAALLGLTTLAILFFSGAHA). 8 disulfides stabilise this stretch: C33-C245, C81-C91, C96-C103, C151-C234, C156-C217, C164-C180, C184-C193, and C194-C204.

Belongs to the thaumatin family. Equally expressed in the abscission zone and surrounding tissues of both fruitlets and leaves.

Its subcellular location is the secreted. Functionally, may be involved in protecting plant tissues from pathogen infection. The protein is Thaumatin-like protein 1 of Prunus persica (Peach).